Consider the following 54-residue polypeptide: Anti-adapter protein SpxO (54 aa).

Interacts with SpxH.

Functionally, inhibitor of Spx proteolytic control. Acts by interacting with SpxH/YjbH, which disrupts interaction between SpxH and Spx, and inhibits SpxH-enhanced proteolysis of Spx by ClpXP. Required for the stabilization of Spx and activation of Spx-regulated genes in response to cell wall stress. The chain is Anti-adapter protein SpxO from Bacillus subtilis (strain 168).